A 316-amino-acid polypeptide reads, in one-letter code: D-alanine--D-alanine ligase (316 aa).

The region spanning 104–303 (KRVWLQHGLP…YADLCVAILA (200 aa)) is the ATP-grasp domain. 130 to 185 (PDRLGLPLILKPPHEGSTVGITKVAGYSDMKAAYELAARFDAEVLAEQFITGRELT) is an ATP binding site. The Mg(2+) site is built by Asp257, Glu270, and Asn272.

Belongs to the D-alanine--D-alanine ligase family. The cofactor is Mg(2+). Mn(2+) is required as a cofactor.

It localises to the cytoplasm. It carries out the reaction 2 D-alanine + ATP = D-alanyl-D-alanine + ADP + phosphate + H(+). It functions in the pathway cell wall biogenesis; peptidoglycan biosynthesis. In terms of biological role, cell wall formation. This Bordetella parapertussis (strain 12822 / ATCC BAA-587 / NCTC 13253) protein is D-alanine--D-alanine ligase.